Consider the following 98-residue polypeptide: Toxin ParE1 (98 aa).

The protein belongs to the RelE toxin family.

Its function is as follows. Toxic component of a type II toxin-antitoxin (TA) system. Its toxic effect is neutralized by coexpression with cognate antitoxin ParD1. This is Toxin ParE1 (parE1) from Mycobacterium tuberculosis (strain CDC 1551 / Oshkosh).